The following is a 418-amino-acid chain: Isocitrate dehydrogenase [NADP] (418 aa).

T106 provides a ligand contact to NADP(+). S115, N117, R121, R131, and R155 together coordinate D-threo-isocitrate. S115 carries the phosphoserine modification. Residue T193 is modified to Phosphothreonine. Position 309 (D309) interacts with Mg(2+). NADP(+) contacts are provided by residues 341-347 (HGTAPKY), N354, Y393, and R397.

It belongs to the isocitrate and isopropylmalate dehydrogenases family. As to quaternary structure, homodimer. Mg(2+) serves as cofactor. It depends on Mn(2+) as a cofactor.

The protein resides in the secreted. The enzyme catalyses D-threo-isocitrate + NADP(+) = 2-oxoglutarate + CO2 + NADPH. In terms of biological role, catalyzes the oxidative decarboxylation of isocitrate to 2-oxoglutarate and carbon dioxide with the concomitant reduction of NADP(+). The protein is Isocitrate dehydrogenase [NADP] (icd) of Pseudomonas aeruginosa (strain UCBPP-PA14).